Consider the following 231-residue polypeptide: 2-C-methyl-D-erythritol 4-phosphate cytidylyltransferase (231 aa).

Belongs to the IspD/TarI cytidylyltransferase family. IspD subfamily.

It carries out the reaction 2-C-methyl-D-erythritol 4-phosphate + CTP + H(+) = 4-CDP-2-C-methyl-D-erythritol + diphosphate. It participates in isoprenoid biosynthesis; isopentenyl diphosphate biosynthesis via DXP pathway; isopentenyl diphosphate from 1-deoxy-D-xylulose 5-phosphate: step 2/6. In terms of biological role, catalyzes the formation of 4-diphosphocytidyl-2-C-methyl-D-erythritol from CTP and 2-C-methyl-D-erythritol 4-phosphate (MEP). The sequence is that of 2-C-methyl-D-erythritol 4-phosphate cytidylyltransferase from Shewanella piezotolerans (strain WP3 / JCM 13877).